Here is a 177-residue protein sequence, read N- to C-terminus: MAEVHIIGQILKAVDFAEPHLYCKWSLQSGNAWRLVQGEVQGQSHVASHRLQSSSDFAQPLDIHLSTASVQGWPRLLVEVYAVNVLQQSWPVGYGFVHVPSTPGTHRLEIGTWKVAPNGLWQSLRERFGGGGAALSKTDLLYSGVERYKLQTLSSGKVIVELNLIFRKFDEYGVEFK.

In terms of domain architecture, C2 B9-type spans 2-118 (AEVHIIGQIL…EIGTWKVAPN (117 aa)).

This sequence belongs to the B9D family. In terms of assembly, probable component of the tectonic-like complex (also named MKS complex), composed of B9d1, B9d2, Cc2d2a, Mks1 and tctn. As to expression, expressed in chordotonal neurons in the antennae (at protein level). Expressed in spermatids (at protein level).

The protein localises to the cytoplasm. It is found in the cytoskeleton. Its subcellular location is the cilium basal body. Its function is as follows. Probable component of the tectonic-like complex (also named MKS complex), a complex localized at the transition zone of primary cilia. Has a role in ciliary structure and function. This Drosophila melanogaster (Fruit fly) protein is B9 domain-containing protein 2.